The following is a 196-amino-acid chain: Fe/S biogenesis protein NfuA (196 aa).

[4Fe-4S] cluster-binding residues include cysteine 154 and cysteine 157.

This sequence belongs to the NfuA family. In terms of assembly, homodimer. [4Fe-4S] cluster is required as a cofactor.

Involved in iron-sulfur cluster biogenesis. Binds a 4Fe-4S cluster, can transfer this cluster to apoproteins, and thereby intervenes in the maturation of Fe/S proteins. Could also act as a scaffold/chaperone for damaged Fe/S proteins. The chain is Fe/S biogenesis protein NfuA from Blochmanniella pennsylvanica (strain BPEN).